Here is a 626-residue protein sequence, read N- to C-terminus: tRNA uridine 5-carboxymethylaminomethyl modification enzyme MnmG (626 aa).

An FAD-binding site is contributed by 13 to 18; the sequence is GGGHAG. 273-287 provides a ligand contact to NAD(+); it reads GPRYCPSIEDKIHRF.

This sequence belongs to the MnmG family. In terms of assembly, homodimer. Heterotetramer of two MnmE and two MnmG subunits. Requires FAD as cofactor.

Its subcellular location is the cytoplasm. Functionally, NAD-binding protein involved in the addition of a carboxymethylaminomethyl (cmnm) group at the wobble position (U34) of certain tRNAs, forming tRNA-cmnm(5)s(2)U34. The protein is tRNA uridine 5-carboxymethylaminomethyl modification enzyme MnmG of Acinetobacter baumannii (strain ATCC 17978 / DSM 105126 / CIP 53.77 / LMG 1025 / NCDC KC755 / 5377).